The sequence spans 468 residues: IQ domain-containing protein C (468 aa).

The IQ domain occupies 6–35 (LVLKVTALQACIRGFLVRRQFQSLRGEYEA). Disordered regions lie at residues 113-157 (NASS…GPGL), 202-245 (EVNQ…PGEP), and 329-468 (SHKE…GPAG). Residues 139–150 (QETRDVSRKNDP) show a composition bias toward basic and acidic residues. Positions 415–426 (SSIERSPSESSH) are enriched in basic and acidic residues.

The sequence is that of IQ domain-containing protein C (IQCC) from Bos taurus (Bovine).